Here is a 558-residue protein sequence, read N- to C-terminus: V-set and immunoglobulin domain-containing protein 10 (558 aa).

Positions methionine 1 to alanine 20 are cleaved as a signal peptide. The Extracellular portion of the chain corresponds to glycine 21–asparagine 426. Residues asparagine 32, asparagine 60, asparagine 121, asparagine 150, asparagine 159, and asparagine 218 are each glycosylated (N-linked (GlcNAc...) asparagine). 4 Ig-like C2-type domains span residues proline 37–valine 140, proline 144–threonine 235, proline 248–serine 327, and proline 332–serine 420. Cysteine 65 and cysteine 124 are oxidised to a cystine. Cystine bridges form between cysteine 174–cysteine 221 and cysteine 265–cysteine 308. Asparagine 344 carries N-linked (GlcNAc...) asparagine glycosylation. A disulfide bridge connects residues cysteine 349 and cysteine 404. Residues isoleucine 427–glycine 447 form a helical membrane-spanning segment. The Cytoplasmic portion of the chain corresponds to leucine 448–valine 558. Over residues aspartate 477–glutamate 506 the composition is skewed to acidic residues. Disordered regions lie at residues aspartate 477 to histidine 515 and methionine 532 to valine 558.

It localises to the membrane. This Mus musculus (Mouse) protein is V-set and immunoglobulin domain-containing protein 10 (Vsig10).